The chain runs to 233 residues: RNA/RNP complex-1-interacting phosphatase homolog (233 aa).

Residues 1-14 (MSNYHHNHNYQHRP) show a composition bias toward basic residues. Positions 1 to 21 (MSNYHHNHNYQHRPRGYERLP) are disordered. A Tyrosine-protein phosphatase domain is found at 34-206 (NVGRDIDGTR…LYEAERKKKY (173 aa)). Catalysis depends on cysteine 150, which acts as the Phosphocysteine intermediate. A substrate-binding site is contributed by 151 to 156 (THGLNR). Arginine 156 (proton donor/acceptor) is an active-site residue. Residues 204 to 233 (KKYGKSSGKSSGNSADSTISSEQLHRNNSQ) are disordered. Residues 208 to 217 (KSSGKSSGNS) show a composition bias toward low complexity. Residues 218–233 (ADSTISSEQLHRNNSQ) are compositionally biased toward polar residues.

Belongs to the protein-tyrosine phosphatase family. Non-receptor class dual specificity subfamily. In terms of assembly, interacts with the ERI/DICER complex component dcr-1. Interacts with ERI/DICER complex components rrf-3 and isoform b of eri-1. Interacts with drh-3 and rde-8.

The protein localises to the cytoplasm. Its subcellular location is the nucleus. Functionally, RNA polyphosphatase which has RNA 5'-triphosphatase and diphosphatase activities. Displays poor protein-tyrosine phosphatase activity. Binds to 5'-triphosphorylated RNAs (also called ppp-RNAs). Dephosphorylates ppp-RNAs converting them to 5'-monophosphorylated RNAs (also called p-RNAs). During small-RNA-mediated gene-silencing or RNA interference (RNAi), involved in the dcr-1-mediated processing of an amplified dsRNA intermediate. This is most likely in association with several components of the ERI/DICER complex including dcr-1, eri-1 and rrf-3. Plays a role in the biogenesis of 26G small interfering RNAs (26G-siRNAs), which are a class of 26 nucleotide siRNAs that possess a guanine residue at the 5'-end, by dephosphorylating 5'-triphosphorylated 26G-siRNAs prior to their maturation by the ERI/DICER complex. Plays a role in the biogenesis of csr-1-bound 22G small interfering RNAs (22G-siRNAs), which are a class of 22 nucleotide siRNAs that possess a guanine residue at the 5'-end. Not required for the biogenesis of microRNAs (miRNA) or for the biogenesis of a class of 21 nucleotide PIWI-interacting RNAs (piRNAs) that possess a uracil residue at the 5'-end (also called 21U-RNAs). In Caenorhabditis elegans, this protein is RNA/RNP complex-1-interacting phosphatase homolog.